The chain runs to 278 residues: Release factor glutamine methyltransferase (278 aa).

S-adenosyl-L-methionine-binding positions include 120 to 124 (GTGTG), aspartate 143, and asparagine 184. 184–187 (NPPY) provides a ligand contact to substrate.

It belongs to the protein N5-glutamine methyltransferase family. PrmC subfamily.

The catalysed reaction is L-glutaminyl-[peptide chain release factor] + S-adenosyl-L-methionine = N(5)-methyl-L-glutaminyl-[peptide chain release factor] + S-adenosyl-L-homocysteine + H(+). Its function is as follows. Methylates the class 1 translation termination release factors RF1/PrfA and RF2/PrfB on the glutamine residue of the universally conserved GGQ motif. The chain is Release factor glutamine methyltransferase from Deinococcus radiodurans (strain ATCC 13939 / DSM 20539 / JCM 16871 / CCUG 27074 / LMG 4051 / NBRC 15346 / NCIMB 9279 / VKM B-1422 / R1).